The primary structure comprises 114 residues: uncharacterized protein (114 aa).

This is an uncharacterized protein from Mycobacterium bovis (strain ATCC BAA-935 / AF2122/97).